The sequence spans 533 residues: GMP synthase [glutamine-hydrolyzing] (533 aa).

The 194-residue stretch at 22–215 (RILILDFGSQ…THNVAGCSGT (194 aa)) folds into the Glutamine amidotransferase type-1 domain. Residue Cys99 is the Nucleophile of the active site. Catalysis depends on residues His189 and Glu191. Residues 216 to 408 (WTMAGFRELE…LGIPESIVGR (193 aa)) form the GMPS ATP-PPase domain. 243–249 (SGGVDSS) contacts ATP.

As to quaternary structure, homodimer.

The enzyme catalyses XMP + L-glutamine + ATP + H2O = GMP + L-glutamate + AMP + diphosphate + 2 H(+). The protein operates within purine metabolism; GMP biosynthesis; GMP from XMP (L-Gln route): step 1/1. Catalyzes the synthesis of GMP from XMP. The chain is GMP synthase [glutamine-hydrolyzing] from Gluconobacter oxydans (strain 621H) (Gluconobacter suboxydans).